We begin with the raw amino-acid sequence, 353 residues long: Putative 3-oxoacyl-[acyl-carrier-protein] synthase 3 (353 aa).

Catalysis depends on residues Cys-122, His-268, and Asn-299.

It belongs to the thiolase-like superfamily. FabH family. Homodimer.

It is found in the cytoplasm. It carries out the reaction malonyl-[ACP] + acetyl-CoA + H(+) = 3-oxobutanoyl-[ACP] + CO2 + CoA. Its pathway is lipid metabolism; fatty acid biosynthesis. Its function is as follows. May catalyze the condensation reaction of fatty acid synthesis by the addition to an acyl acceptor of two carbons from malonyl-ACP. The protein is Putative 3-oxoacyl-[acyl-carrier-protein] synthase 3 of Campylobacter jejuni subsp. jejuni serotype O:2 (strain ATCC 700819 / NCTC 11168).